Here is a 245-residue protein sequence, read N- to C-terminus: Flavin-dependent thymidylate synthase (245 aa).

The ThyX domain occupies 6–220; the sequence is PRVELLAHTP…PELFAHAGAK (215 aa). Residues S65, 89-91, and Q97 each bind FAD; that span reads RHR. Residues 86–89, 97–101, and R159 contribute to the dUMP site; these read QLVR and QQSQR. The short motif at 89–99 is the ThyX motif element; sequence RHRIASFSQQS. FAD contacts are provided by residues 175 to 177 and H181; that span reads NCR. R186 contributes to the dUMP binding site. R186 functions as the Involved in ionization of N3 of dUMP, leading to its activation in the catalytic mechanism.

The protein belongs to the thymidylate synthase ThyX family. Homotetramer. It depends on FAD as a cofactor.

The catalysed reaction is dUMP + (6R)-5,10-methylene-5,6,7,8-tetrahydrofolate + NADPH + H(+) = dTMP + (6S)-5,6,7,8-tetrahydrofolate + NADP(+). Its pathway is pyrimidine metabolism; dTTP biosynthesis. Its function is as follows. Catalyzes the reductive methylation of 2'-deoxyuridine-5'-monophosphate (dUMP) to 2'-deoxythymidine-5'-monophosphate (dTMP) while utilizing 5,10-methylenetetrahydrofolate (mTHF) as the methyl donor, and NADPH and FADH(2) as the reductant. This is Flavin-dependent thymidylate synthase from Nitratidesulfovibrio vulgaris (strain ATCC 29579 / DSM 644 / CCUG 34227 / NCIMB 8303 / VKM B-1760 / Hildenborough) (Desulfovibrio vulgaris).